A 336-amino-acid polypeptide reads, in one-letter code: N-((2S)-2-amino-2-carboxyethyl)-L-glutamate dehydrogenase (336 aa).

The active-site Proton donor/acceptor is Lys78. Residues Arg122 and Lys242 each coordinate NAD(+).

Belongs to the ornithine cyclodeaminase/mu-crystallin family. In terms of assembly, homodimer.

The catalysed reaction is N-[(2S)-2-amino-2-carboxyethyl]-L-glutamate + NAD(+) + H2O = (S)-2,3-diaminopropanoate + 2-oxoglutarate + NADH + H(+). It functions in the pathway siderophore biosynthesis. Functionally, catalyzes the hydrolysis of N-((2S)-2-amino-2-carboxyethyl)-L-glutamate (ACEGA) to form L-2,3-diaminopropionic acid and 2-oxoglutarate. Involved in the biosynthesis of L-2,3-diaminopropionic acid (L-Dap), a precursor of staphyloferrin B and antibiotics. The protein is N-((2S)-2-amino-2-carboxyethyl)-L-glutamate dehydrogenase of Staphylococcus aureus (strain NCTC 8325 / PS 47).